A 129-amino-acid chain; its full sequence is Translation initiation factor 5A (129 aa).

Lys-36 carries the hypusine modification.

The protein belongs to the eIF-5A family.

The protein resides in the cytoplasm. In terms of biological role, functions by promoting the formation of the first peptide bond. This chain is Translation initiation factor 5A (eif5a), found in Thermoplasma acidophilum (strain ATCC 25905 / DSM 1728 / JCM 9062 / NBRC 15155 / AMRC-C165).